Consider the following 144-residue polypeptide: Galectin b (144 aa).

The Galectin domain occupies 1–138; it reads DHIDLEFDVG…DAVLRKLCVV (138 aa).

Lectin that binds beta-galactoside and a wide array of complex carbohydrates. The protein is Galectin b of Aplysina lactuca (Marine sponge).